Consider the following 92-residue polypeptide: RQC P-site tRNA stabilizing factor (92 aa).

The S4 RNA-binding domain occupies 5–65 (MRLDKYLKVS…GPKIVTAKIE (61 aa)).

It belongs to the RqcP family. Associates with stalled 50S ribosomal subunits. Binds to RqcH, 23S rRNA and the P-site tRNA. Does not require RqcH for association with 50S subunits.

Functionally, key component of the ribosome quality control system (RQC), a ribosome-associated complex that mediates the extraction of incompletely synthesized nascent chains from stalled ribosomes and their subsequent degradation. RqcH recruits Ala-charged tRNA, and with RqcP directs the elongation of stalled nascent chains on 50S ribosomal subunits, leading to non-templated C-terminal alanine extensions (Ala tail). The Ala tail promotes nascent chain degradation. RqcP is associated with the translocation-like movement of the peptidyl-tRNA from the A-site into the P-site. The protein is RQC P-site tRNA stabilizing factor of Listeria monocytogenes serovar 1/2a (strain ATCC BAA-679 / EGD-e).